A 146-amino-acid polypeptide reads, in one-letter code: 16.0 kDa heat shock protein, peroxisomal (146 aa).

One can recognise a sHSP domain in the interval 23-143 (WASASATAAM…RPRTRPIAVS (121 aa)). The short motif at 144–146 (SKL) is the Microbody targeting signal element.

Belongs to the small heat shock protein (HSP20) family. In terms of assembly, may form oligomeric structures.

Its subcellular location is the peroxisome. In Oryza sativa subsp. japonica (Rice), this protein is 16.0 kDa heat shock protein, peroxisomal (HSP16.0).